Reading from the N-terminus, the 368-residue chain is tRNA-specific 2-thiouridylase MnmA (368 aa).

ATP is bound by residues Gly11–Ser18 and Met37. The tract at residues Asn97 to Asp99 is interaction with target base in tRNA. Residue Cys102 is the Nucleophile of the active site. An intrachain disulfide couples Cys102 to Cys199. ATP is bound at residue Gly127. Positions Lys149–Gln151 are interaction with tRNA. Catalysis depends on Cys199, which acts as the Cysteine persulfide intermediate. The tract at residues Arg311 to Tyr312 is interaction with tRNA.

This sequence belongs to the MnmA/TRMU family. In terms of assembly, interacts with TusE.

The protein localises to the cytoplasm. It carries out the reaction S-sulfanyl-L-cysteinyl-[protein] + uridine(34) in tRNA + AH2 + ATP = 2-thiouridine(34) in tRNA + L-cysteinyl-[protein] + A + AMP + diphosphate + H(+). Catalyzes the 2-thiolation of uridine at the wobble position (U34) of tRNA(Lys), tRNA(Glu) and tRNA(Gln), leading to the formation of s(2)U34, the first step of tRNA-mnm(5)s(2)U34 synthesis. Sulfur is provided by IscS, via a sulfur-relay system. Binds ATP and its substrate tRNAs. The polypeptide is tRNA-specific 2-thiouridylase MnmA (Escherichia coli O6:H1 (strain CFT073 / ATCC 700928 / UPEC)).